The primary structure comprises 149 residues: MGISVKDVSSHEFTRAFAAFLKKSGKMKVPEWTDFVKTGMFKELSPYEPDWYFIRAASICRHLYIRSPAGIGSFEKIYGGRRRRGTAPSHFCKANGSISRRLLQSLEGLKIVEKDPNGGRRLTSQGRRDLDRIAAQIAPKRAPSAPKTV.

Belongs to the eukaryotic ribosomal protein eS19 family.

The sequence is that of Small ribosomal subunit protein eS19 (RPS19) from Mya arenaria (Soft-shell clam).